Reading from the N-terminus, the 357-residue chain is Prostaglandin E2 receptor EP2 subtype (357 aa).

Residues 1–24 (MDNSFNDSRRVENCESRQYLLSDE) lie on the Extracellular side of the membrane. N-linked (GlcNAc...) asparagine glycosylation is present at Asn-6. The helical transmembrane segment at 25–48 (SPAISSVMFTAGVLGNLIALALLA) threads the bilayer. Topologically, residues 49 to 66 (RRWRGDTGCSAGSRTSIS) are cytoplasmic. The chain crosses the membrane as a helical span at residues 67-92 (LFHVLVTELVLTDLLGTCLISPVVLA). At 93–112 (SYSRNQTLVALAPESRACTY) the chain is on the extracellular side. A disulfide bond links Cys-110 and Cys-188. Residues 113 to 133 (FAFTMTFFSLATMLMLFAMAL) traverse the membrane as a helical segment. Topologically, residues 134–152 (ERYLAIGHPYFYRRRVSRR) are cytoplasmic. A helical transmembrane segment spans residues 153–177 (GGLAVLPAIYGVSLLFCSLPLLNYG). Residues 178–199 (EYVQYCPGTWCFIQHGRTAYLQ) lie on the Extracellular side of the membrane. A helical membrane pass occupies residues 200 to 224 (LYATVLLLLIVAVLGCNISVILNLI). Over 225–262 (RMQLRSKRSRCGLSGSSLRGPGSRRRGERTSMAEETDH) the chain is Cytoplasmic. Residues 235–245 (CGLSGSSLRGP) show a composition bias toward low complexity. The tract at residues 235–255 (CGLSGSSLRGPGSRRRGERTS) is disordered. Residues 263–286 (LILLAIMTITFAVCSLPFTIFAYM) traverse the membrane as a helical segment. The Extracellular portion of the chain corresponds to 287–299 (DETSSRKEKWDLR). A helical transmembrane segment spans residues 300-323 (ALRFLSVNSIIDPWVFVILRPPVL). Over 324–357 (RLMRSVLCCRTSLRAPEAPGASCSTQQTDLCGQL) the chain is Cytoplasmic.

The protein belongs to the G-protein coupled receptor 1 family.

The protein localises to the cell membrane. Functionally, receptor for prostaglandin E2 (PGE2). The activity of this receptor is mediated by G(s) proteins that stimulate adenylate cyclase. The subsequent raise in intracellular cAMP is responsible for the relaxing effect of this receptor on smooth muscle. This Rattus norvegicus (Rat) protein is Prostaglandin E2 receptor EP2 subtype (Ptger2).